A 96-amino-acid polypeptide reads, in one-letter code: Growth-regulated alpha protein (96 aa).

An N-terminal signal peptide occupies residues 1–24 (MVSATRSLLCAALPVLATSRQATG). 2 cysteine pairs are disulfide-bonded: cysteine 33–cysteine 59 and cysteine 35–cysteine 75.

This sequence belongs to the intercrine alpha (chemokine CxC) family. Monomer and homodimer. As to expression, at least expressed in the lung and trachea.

Its subcellular location is the secreted. In terms of biological role, has chemotactic activity for neutrophils. Contributes to neutrophil activation during inflammation. In Rattus norvegicus (Rat), this protein is Growth-regulated alpha protein (Cxcl1).